The chain runs to 67 residues: SPbeta prophage-derived uncharacterized protein YopZ (67 aa).

Residues 1 to 40 adopt a coiled-coil conformation; that stretch reads MTSEMQLQAQIDVIEKENKELRRRNEELGQTVECQNKQIV. A helical transmembrane segment spans residues 44–66; that stretch reads WRLLFFASSWIVYGIVSAIKYLW.

The protein resides in the cell membrane. The protein is SPbeta prophage-derived uncharacterized protein YopZ (yopZ) of Bacillus subtilis (strain 168).